Consider the following 396-residue polypeptide: Probable 20S rRNA accumulation protein 4 (396 aa).

The protein belongs to the TSR4 family.

It is found in the cytoplasm. It localises to the nucleus. The protein resides in the nucleolus. Functionally, required for processing of the 20S pre-rRNA at site D to generate mature 18S rRNA. The protein is Probable 20S rRNA accumulation protein 4 of Schizosaccharomyces pombe (strain 972 / ATCC 24843) (Fission yeast).